We begin with the raw amino-acid sequence, 223 residues long: Phosphoribosylformylglycinamidine synthase subunit PurQ (223 aa).

The Glutamine amidotransferase type-1 domain maps to 3–223 (SAVVQLPGLN…FASALDVIAA (221 aa)). Cysteine 86 acts as the Nucleophile in catalysis. Active-site residues include histidine 196 and glutamate 198.

Part of the FGAM synthase complex composed of 1 PurL, 1 PurQ and 2 PurS subunits.

Its subcellular location is the cytoplasm. The enzyme catalyses N(2)-formyl-N(1)-(5-phospho-beta-D-ribosyl)glycinamide + L-glutamine + ATP + H2O = 2-formamido-N(1)-(5-O-phospho-beta-D-ribosyl)acetamidine + L-glutamate + ADP + phosphate + H(+). It catalyses the reaction L-glutamine + H2O = L-glutamate + NH4(+). Its pathway is purine metabolism; IMP biosynthesis via de novo pathway; 5-amino-1-(5-phospho-D-ribosyl)imidazole from N(2)-formyl-N(1)-(5-phospho-D-ribosyl)glycinamide: step 1/2. Its function is as follows. Part of the phosphoribosylformylglycinamidine synthase complex involved in the purines biosynthetic pathway. Catalyzes the ATP-dependent conversion of formylglycinamide ribonucleotide (FGAR) and glutamine to yield formylglycinamidine ribonucleotide (FGAM) and glutamate. The FGAM synthase complex is composed of three subunits. PurQ produces an ammonia molecule by converting glutamine to glutamate. PurL transfers the ammonia molecule to FGAR to form FGAM in an ATP-dependent manner. PurS interacts with PurQ and PurL and is thought to assist in the transfer of the ammonia molecule from PurQ to PurL. The chain is Phosphoribosylformylglycinamidine synthase subunit PurQ from Rhizobium meliloti (strain 1021) (Ensifer meliloti).